The primary structure comprises 96 residues: Large ribosomal subunit protein bL21 (96 aa).

Residues 73 to 84 (KRRKRYQSRNGH) are compositionally biased toward basic residues. The segment at 73–96 (KRRKRYQSRNGHRQQMTQIEVVSL) is disordered. The span at 85–96 (RQQMTQIEVVSL) shows a compositional bias: polar residues.

The protein belongs to the bacterial ribosomal protein bL21 family. Part of the 50S ribosomal subunit. Contacts protein L20.

Its function is as follows. This protein binds to 23S rRNA in the presence of protein L20. This is Large ribosomal subunit protein bL21 from Chlorobium luteolum (strain DSM 273 / BCRC 81028 / 2530) (Pelodictyon luteolum).